A 156-amino-acid chain; its full sequence is Small ribosomal subunit protein uS7 (156 aa).

Belongs to the universal ribosomal protein uS7 family. As to quaternary structure, part of the 30S ribosomal subunit. Contacts proteins S9 and S11.

Functionally, one of the primary rRNA binding proteins, it binds directly to 16S rRNA where it nucleates assembly of the head domain of the 30S subunit. Is located at the subunit interface close to the decoding center, probably blocks exit of the E-site tRNA. This chain is Small ribosomal subunit protein uS7, found in Alkaliphilus oremlandii (strain OhILAs) (Clostridium oremlandii (strain OhILAs)).